Here is a 749-residue protein sequence, read N- to C-terminus: 1,4-alpha-glucan branching enzyme GlgB (749 aa).

Catalysis depends on Asp-427, which acts as the Nucleophile. The active-site Proton donor is Glu-480.

This sequence belongs to the glycosyl hydrolase 13 family. GlgB subfamily. In terms of assembly, monomer.

It carries out the reaction Transfers a segment of a (1-&gt;4)-alpha-D-glucan chain to a primary hydroxy group in a similar glucan chain.. The protein operates within glycan biosynthesis; glycogen biosynthesis. In terms of biological role, catalyzes the formation of the alpha-1,6-glucosidic linkages in glycogen by scission of a 1,4-alpha-linked oligosaccharide from growing alpha-1,4-glucan chains and the subsequent attachment of the oligosaccharide to the alpha-1,6 position. The polypeptide is 1,4-alpha-glucan branching enzyme GlgB (Thermobifida fusca (strain YX)).